The sequence spans 201 residues: Pyridoxal 5'-phosphate synthase subunit PdxT (201 aa).

48 to 50 lines the L-glutamine pocket; sequence GES. C80 functions as the Nucleophile in the catalytic mechanism. L-glutamine-binding positions include R109 and 137–138; that span reads IR. Active-site charge relay system residues include H180 and E182.

The protein belongs to the glutaminase PdxT/SNO family. In terms of assembly, in the presence of PdxS, forms a dodecamer of heterodimers. Only shows activity in the heterodimer.

It catalyses the reaction aldehydo-D-ribose 5-phosphate + D-glyceraldehyde 3-phosphate + L-glutamine = pyridoxal 5'-phosphate + L-glutamate + phosphate + 3 H2O + H(+). The enzyme catalyses L-glutamine + H2O = L-glutamate + NH4(+). The protein operates within cofactor biosynthesis; pyridoxal 5'-phosphate biosynthesis. Its function is as follows. Catalyzes the hydrolysis of glutamine to glutamate and ammonia as part of the biosynthesis of pyridoxal 5'-phosphate. The resulting ammonia molecule is channeled to the active site of PdxS. The protein is Pyridoxal 5'-phosphate synthase subunit PdxT of Cutibacterium acnes (strain DSM 16379 / KPA171202) (Propionibacterium acnes).